Here is a 125-residue protein sequence, read N- to C-terminus: Gem-associated protein 7 (125 aa).

An N-acetylmethionine modification is found at Met1. One can recognise an SUZ-C domain in the interval 1–29; sequence MQTPLATPVPVLRLPRGPDGSNRGFAPDG. Positions 1–52 are disordered; it reads MQTPLATPVPVLRLPRGPDGSNRGFAPDGRRAPPKPEVPEPPESRESWEQQA. Thr3 is subject to Phosphothreonine. Residues 59–125 form the Sm domain; that stretch reads RYLRSLLAMV…SDIISYTFKP (67 aa).

It belongs to the gemin-7 family. As to quaternary structure, part of the core SMN complex that contains SMN1, GEMIN2/SIP1, DDX20/GEMIN3, GEMIN4, GEMIN5, GEMIN6, GEMIN7, GEMIN8 and STRAP/UNRIP. Part of the SMN-Sm complex that contains SMN1, GEMIN2/SIP1, DDX20/GEMIN3, GEMIN4, GEMIN5, GEMIN6, GEMIN7, GEMIN8, STRAP/UNRIP and the Sm proteins SNRPB, SNRPD1, SNRPD2, SNRPD3, SNRPE, SNRPF and SNRPG. Interacts with GEMIN6; the interaction is direct. Interacts with STRAP/UNRIP; the interaction is direct. Interacts with GEMIN8; the interaction is direct. Interacts with SNRPB, SNRPD2, SNRPD3 and SNRPE; the interaction is direct.

It localises to the nucleus. Its subcellular location is the nucleoplasm. The protein localises to the gem. It is found in the cytoplasm. Its function is as follows. The SMN complex catalyzes the assembly of small nuclear ribonucleoproteins (snRNPs), the building blocks of the spliceosome, and thereby plays an important role in the splicing of cellular pre-mRNAs. Most spliceosomal snRNPs contain a common set of Sm proteins SNRPB, SNRPD1, SNRPD2, SNRPD3, SNRPE, SNRPF and SNRPG that assemble in a heptameric protein ring on the Sm site of the small nuclear RNA to form the core snRNP (Sm core). In the cytosol, the Sm proteins SNRPD1, SNRPD2, SNRPE, SNRPF and SNRPG are trapped in an inactive 6S pICln-Sm complex by the chaperone CLNS1A that controls the assembly of the core snRNP. To assemble core snRNPs, the SMN complex accepts the trapped 5Sm proteins from CLNS1A forming an intermediate. Binding of snRNA inside 5Sm triggers eviction of the SMN complex, thereby allowing binding of SNRPD3 and SNRPB to complete assembly of the core snRNP. The polypeptide is Gem-associated protein 7 (GEMIN7) (Bos taurus (Bovine)).